The chain runs to 260 residues: Thiazole synthase (260 aa).

The Schiff-base intermediate with DXP role is filled by K100. Residues G162, 188–189, and 210–211 each bind 1-deoxy-D-xylulose 5-phosphate; these read AG and NT.

It belongs to the ThiG family. Homotetramer. Forms heterodimers with either ThiH or ThiS.

It is found in the cytoplasm. The enzyme catalyses [ThiS sulfur-carrier protein]-C-terminal-Gly-aminoethanethioate + 2-iminoacetate + 1-deoxy-D-xylulose 5-phosphate = [ThiS sulfur-carrier protein]-C-terminal Gly-Gly + 2-[(2R,5Z)-2-carboxy-4-methylthiazol-5(2H)-ylidene]ethyl phosphate + 2 H2O + H(+). Its pathway is cofactor biosynthesis; thiamine diphosphate biosynthesis. Its function is as follows. Catalyzes the rearrangement of 1-deoxy-D-xylulose 5-phosphate (DXP) to produce the thiazole phosphate moiety of thiamine. Sulfur is provided by the thiocarboxylate moiety of the carrier protein ThiS. In vitro, sulfur can be provided by H(2)S. This chain is Thiazole synthase, found in Wolinella succinogenes (strain ATCC 29543 / DSM 1740 / CCUG 13145 / JCM 31913 / LMG 7466 / NCTC 11488 / FDC 602W) (Vibrio succinogenes).